We begin with the raw amino-acid sequence, 192 residues long: Molybdenum cofactor guanylyltransferase (192 aa).

GTP contacts are provided by residues 10–12 (LAG), lysine 23, asparagine 51, aspartate 69, and aspartate 99. Aspartate 99 contributes to the Mg(2+) binding site.

Belongs to the MobA family. In terms of assembly, monomer. Mg(2+) serves as cofactor.

It is found in the cytoplasm. The catalysed reaction is Mo-molybdopterin + GTP + H(+) = Mo-molybdopterin guanine dinucleotide + diphosphate. In terms of biological role, transfers a GMP moiety from GTP to Mo-molybdopterin (Mo-MPT) cofactor (Moco or molybdenum cofactor) to form Mo-molybdopterin guanine dinucleotide (Mo-MGD) cofactor. The polypeptide is Molybdenum cofactor guanylyltransferase (Haemophilus influenzae (strain ATCC 51907 / DSM 11121 / KW20 / Rd)).